The primary structure comprises 277 residues: Peptide deformylase 1A, chloroplastic (277 aa).

The Zn(2+) site is built by Cys196 and His238. Glu239 is a catalytic residue. Residue His242 coordinates Zn(2+).

Belongs to the polypeptide deformylase family. The cofactor is Zn(2+).

The protein resides in the plastid. Its subcellular location is the chloroplast stroma. The enzyme catalyses N-terminal N-formyl-L-methionyl-[peptide] + H2O = N-terminal L-methionyl-[peptide] + formate. Functionally, removes the formyl group from the N-terminal Met of newly synthesized proteins. This Solanum lycopersicum (Tomato) protein is Peptide deformylase 1A, chloroplastic (PDF1A).